The chain runs to 1220 residues: DNA-directed RNA polymerase subunit beta' (1220 aa).

Positions 60, 62, 75, and 78 each coordinate Zn(2+). The Mg(2+) site is built by aspartate 449, aspartate 451, and aspartate 453. Positions 818, 892, 899, and 902 each coordinate Zn(2+).

It belongs to the RNA polymerase beta' chain family. In terms of assembly, the RNAP catalytic core consists of 2 alpha, 1 beta, 1 beta' and 1 omega subunit. When a sigma factor is associated with the core the holoenzyme is formed, which can initiate transcription. It depends on Mg(2+) as a cofactor. Zn(2+) serves as cofactor.

The catalysed reaction is RNA(n) + a ribonucleoside 5'-triphosphate = RNA(n+1) + diphosphate. DNA-dependent RNA polymerase catalyzes the transcription of DNA into RNA using the four ribonucleoside triphosphates as substrates. The chain is DNA-directed RNA polymerase subunit beta' from Lacticaseibacillus casei (strain BL23) (Lactobacillus casei).